A 232-amino-acid polypeptide reads, in one-letter code: GTP cyclohydrolase III (232 aa).

This sequence belongs to the archaeal-type GTP cyclohydrolase family.

The catalysed reaction is GTP + 3 H2O = 2-amino-5-formylamino-6-(5-phospho-D-ribosylamino)pyrimidin-4(3H)-one + 2 phosphate + 2 H(+). Its function is as follows. Catalyzes the formation of 2-amino-5-formylamino-6-ribofuranosylamino-4(3H)-pyrimidinone ribonucleotide monophosphate and inorganic phosphate from GTP. Also has an independent pyrophosphate phosphohydrolase activity. In Saccharolobus islandicus (strain Y.N.15.51 / Yellowstone #2) (Sulfolobus islandicus), this protein is GTP cyclohydrolase III.